A 134-amino-acid polypeptide reads, in one-letter code: Small ribosomal subunit protein uS11 (134 aa).

A disordered region spans residues Ser114–Val134.

Belongs to the universal ribosomal protein uS11 family. In terms of assembly, part of the 30S ribosomal subunit. Interacts with proteins S7 and S18. Binds to IF-3.

In terms of biological role, located on the platform of the 30S subunit, it bridges several disparate RNA helices of the 16S rRNA. Forms part of the Shine-Dalgarno cleft in the 70S ribosome. This Corynebacterium efficiens (strain DSM 44549 / YS-314 / AJ 12310 / JCM 11189 / NBRC 100395) protein is Small ribosomal subunit protein uS11.